Reading from the N-terminus, the 152-residue chain is Complexin (152 aa).

A disordered region spans residues 1-119 (MAAFIAKQMV…EEEDDDEFAK (119 aa)). Residues 23–39 (DEGEKEGNENAEEEAAA) show a composition bias toward acidic residues. Basic and acidic residues-rich tracts occupy residues 41–82 (EEAR…VKEE) and 90–104 (DEGRVGRKKKTKEEL). The interaction with the SNARE complex stretch occupies residues 59–75 (EEEREEMRQTIRDKYGL). Cysteine methyl ester is present on cysteine 149. Cysteine 149 carries the S-farnesyl cysteine lipid modification. A propeptide spans 150 to 152 (SLQ) (removed in mature form).

The protein belongs to the complexin/synaphin family. As to quaternary structure, binds to the SNARE core complex containing SNAP25, synaptobrevin and syntaxin-1.

The protein localises to the membrane. It is found in the cytoplasm. Its subcellular location is the cytosol. Positively regulates a late step in synaptic vesicle exocytosis. This Doryteuthis pealeii (Longfin inshore squid) protein is Complexin (cpx).